Here is a 160-residue protein sequence, read N- to C-terminus: Transcriptional repressor NrdR (160 aa).

A zinc finger lies at 3-34 (CPYCQYEDTQVKDSRPVEEGAVIRRRRVCPVC). The 91-residue stretch at 49–139 (LLVSKKSGRC…VYRDFRNASD (91 aa)) folds into the ATP-cone domain.

Belongs to the NrdR family. The cofactor is Zn(2+).

In terms of biological role, negatively regulates transcription of bacterial ribonucleotide reductase nrd genes and operons by binding to NrdR-boxes. This chain is Transcriptional repressor NrdR, found in Bartonella quintana (strain Toulouse) (Rochalimaea quintana).